We begin with the raw amino-acid sequence, 393 residues long: Sialyltransferase-like protein 1 (393 aa).

At 1–8 (MKRPLRRP) the chain is on the cytoplasmic side. Residues 9–27 (FAVLLFVVLCAAASFPSVL) form a helical; Signal-anchor for type II membrane protein membrane-spanning segment. Residues 28–393 (RRSVGPAPVL…IAVPPVVFYH (366 aa)) lie on the Lumenal side of the membrane. N-linked (GlcNAc...) asparagine glycans are attached at residues N49, N212, and N258.

This sequence belongs to the glycosyltransferase 29 family.

It localises to the golgi apparatus membrane. Its function is as follows. Possesses sialyltransferase-like activity in vitro. Transfers sialic acid to the oligosaccharide Gal-beta-1,3-GalNAc and to glycoproteins such as asialofetuin, alpha-1-acid glycoprotein (NeuAc-alpha-2,3-Gal-beta-1,3-GalNAc-) and andasialo-alpha-1-acid glycoprotein. The transferred sialic acid is linked to galactose of Gal-beta-1,3-GalNAc through alpha-2,6-linkage. In Oryza sativa subsp. indica (Rice), this protein is Sialyltransferase-like protein 1.